We begin with the raw amino-acid sequence, 249 residues long: MLFNPPLVPARLIARYKRFLFDAELESGEIITGSCPNTGSMQGLTTPGSRIWLSEHEGAKRKYRHVFELIEADGTTVGVNTAMPNRTAAEAIALGQISDLGDYTTVRREQNYGRNSRIDLLLTDPLRTTTYVEVKNVHFMREPGLAEFPDTVTARGAKHLEELGDMADAGHRAVMLFVIQRHDCDRFRVCGDLDVVYATAFQRALKRGVEVYALKCRVSPTEITPAGLIPIDEPGIAALNTKYKISAEG.

It belongs to the SfsA family.

The protein is Sugar fermentation stimulation protein homolog of Rhizobium rhizogenes (strain K84 / ATCC BAA-868) (Agrobacterium radiobacter).